The primary structure comprises 125 residues: Interleukin-6 (125 aa).

Cysteines 16 and 26 form a disulfide.

Belongs to the IL-6 superfamily. As to quaternary structure, component of a hexamer of two molecules each of IL6, IL6R and IL6ST; first binds to IL6R to associate with the signaling subunit IL6ST. Interacts with IL6R (via the N-terminal ectodomain); this interaction may be affected by IL6R-binding with SORL1, hence decreasing IL6 cis signaling. Interacts with SORL1 (via the N-terminal ectodomain); this interaction leads to IL6 internalization and lysosomal degradation. May form a trimeric complex with the soluble SORL1 ectodomain and soluble IL6R receptor; this interaction might stabilize circulating IL6, hence promoting IL6 trans signaling.

The protein localises to the secreted. In terms of biological role, cytokine with a wide variety of biological functions in immunity, tissue regeneration, and metabolism. Binds to IL6R, then the complex associates to the signaling subunit IL6ST/gp130 to trigger the intracellular IL6-signaling pathway. The interaction with the membrane-bound IL6R and IL6ST stimulates 'classic signaling', whereas the binding of IL6 and soluble IL6R to IL6ST stimulates 'trans-signaling'. Alternatively, 'cluster signaling' occurs when membrane-bound IL6:IL6R complexes on transmitter cells activate IL6ST receptors on neighboring receiver cells. Its function is as follows. IL6 is a potent inducer of the acute phase response. Rapid production of IL6 contributes to host defense during infection and tissue injury, but excessive IL6 synthesis is involved in disease pathology. In the innate immune response, is synthesized by myeloid cells, such as macrophages and dendritic cells, upon recognition of pathogens through toll-like receptors (TLRs) at the site of infection or tissue injury. In the adaptive immune response, is required for the differentiation of B cells into immunoglobulin-secreting cells. Plays a major role in the differentiation of CD4(+) T cell subsets. Essential factor for the development of T follicular helper (Tfh) cells that are required for the induction of germinal-center formation. Required to drive naive CD4(+) T cells to the Th17 lineage. Also required for proliferation of myeloma cells and the survival of plasmablast cells. Functionally, acts as an essential factor in bone homeostasis and on vessels directly or indirectly by induction of VEGF, resulting in increased angiogenesis activity and vascular permeability. Induces, through 'trans-signaling' and synergistically with IL1B and TNF, the production of VEGF. Involved in metabolic controls, is discharged into the bloodstream after muscle contraction increasing lipolysis and improving insulin resistance. 'Trans-signaling' in central nervous system also regulates energy and glucose homeostasis. Mediates, through GLP-1, crosstalk between insulin-sensitive tissues, intestinal L cells and pancreatic islets to adapt to changes in insulin demand. Also acts as a myokine. Plays a protective role during liver injury, being required for maintenance of tissue regeneration. Also has a pivotal role in iron metabolism by regulating HAMP/hepcidin expression upon inflammation or bacterial infection. Through activation of IL6ST-YAP-NOTCH pathway, induces inflammation-induced epithelial regeneration. The protein is Interleukin-6 (IL6) of Neovison vison (American mink).